A 500-amino-acid chain; its full sequence is UDP-N-acetylmuramoyl-L-alanyl-D-glutamate--2,6-diaminopimelate ligase (500 aa).

Ser-38 is a UDP-N-acetyl-alpha-D-muramoyl-L-alanyl-D-glutamate binding site. ATP is bound at residue 118–124; the sequence is GTNGKTS. UDP-N-acetyl-alpha-D-muramoyl-L-alanyl-D-glutamate is bound by residues 160–161, Ser-187, and Arg-195; that span reads TT. An N6-carboxylysine modification is found at Lys-227. Residues Arg-395, 419–422, Gly-471, and Glu-475 contribute to the meso-2,6-diaminopimelate site; that span reads DNPR. Residues 419–422 carry the Meso-diaminopimelate recognition motif motif; sequence DNPR.

Belongs to the MurCDEF family. MurE subfamily. The cofactor is Mg(2+). In terms of processing, carboxylation is probably crucial for Mg(2+) binding and, consequently, for the gamma-phosphate positioning of ATP.

The protein resides in the cytoplasm. It carries out the reaction UDP-N-acetyl-alpha-D-muramoyl-L-alanyl-D-glutamate + meso-2,6-diaminopimelate + ATP = UDP-N-acetyl-alpha-D-muramoyl-L-alanyl-gamma-D-glutamyl-meso-2,6-diaminopimelate + ADP + phosphate + H(+). The protein operates within cell wall biogenesis; peptidoglycan biosynthesis. In terms of biological role, catalyzes the addition of meso-diaminopimelic acid to the nucleotide precursor UDP-N-acetylmuramoyl-L-alanyl-D-glutamate (UMAG) in the biosynthesis of bacterial cell-wall peptidoglycan. The sequence is that of UDP-N-acetylmuramoyl-L-alanyl-D-glutamate--2,6-diaminopimelate ligase from Leptospira borgpetersenii serovar Hardjo-bovis (strain L550).